Consider the following 152-residue polypeptide: Nucleoside diphosphate kinase (152 aa).

Residues K10, F58, R86, T92, R103, and N113 each contribute to the ATP site. The active-site Pros-phosphohistidine intermediate is the H116.

This sequence belongs to the NDK family. Mg(2+) is required as a cofactor.

The protein resides in the cytoplasm. The catalysed reaction is a 2'-deoxyribonucleoside 5'-diphosphate + ATP = a 2'-deoxyribonucleoside 5'-triphosphate + ADP. It carries out the reaction a ribonucleoside 5'-diphosphate + ATP = a ribonucleoside 5'-triphosphate + ADP. Functionally, major role in the synthesis of nucleoside triphosphates other than ATP. The ATP gamma phosphate is transferred to the NDP beta phosphate via a ping-pong mechanism, using a phosphorylated active-site intermediate. This is Nucleoside diphosphate kinase from Methanosphaera stadtmanae (strain ATCC 43021 / DSM 3091 / JCM 11832 / MCB-3).